A 144-amino-acid chain; its full sequence is Maximins 10/H3 (144 aa).

A signal peptide spans 1–18; the sequence is MNFKYIVAVSFLIASAYA. A propeptide spanning residues 19–43 is cleaved from the precursor; sequence RSVKNDEQSLSQRDVLDEESLREFR. Serine amide is present on S70. Residues 74 to 123 constitute a propeptide that is removed on maturation; sequence TAEDHEVMKRLEAVMRDLDSLDYPEEATERETRGFNQEEIANLFTKKEKR. I143 is modified (isoleucine amide).

This sequence belongs to the bombinin family. Expressed by the skin glands.

It localises to the secreted. Maximin-10 shows antimicrobial activity against bacteria and against the fungus C.albicans. It has little hemolytic activity. In terms of biological role, maximin-H3 shows antibacterial activity against both Gram-positive and Gram-negative bacteria. It also shows antimicrobial activity against the fungus C.albicans. Shows strong hemolytic activity. This chain is Maximins 10/H3, found in Bombina maxima (Giant fire-bellied toad).